We begin with the raw amino-acid sequence, 357 residues long: 3-isopropylmalate dehydrogenase (357 aa).

Substrate-binding residues include arginine 97, arginine 107, arginine 135, and aspartate 224. Mg(2+) contacts are provided by aspartate 224, aspartate 248, and aspartate 252. NAD(+) is bound at residue 282–294; that stretch reads GSAPDIAGQDKAN.

The protein belongs to the isocitrate and isopropylmalate dehydrogenases family. LeuB type 1 subfamily. Homodimer. The cofactor is Mg(2+). Mn(2+) serves as cofactor.

It localises to the cytoplasm. It catalyses the reaction (2R,3S)-3-isopropylmalate + NAD(+) = 4-methyl-2-oxopentanoate + CO2 + NADH. The protein operates within amino-acid biosynthesis; L-leucine biosynthesis; L-leucine from 3-methyl-2-oxobutanoate: step 3/4. In terms of biological role, catalyzes the oxidation of 3-carboxy-2-hydroxy-4-methylpentanoate (3-isopropylmalate) to 3-carboxy-4-methyl-2-oxopentanoate. The product decarboxylates to 4-methyl-2 oxopentanoate. This is 3-isopropylmalate dehydrogenase from Synechococcus sp. (strain CC9605).